A 419-amino-acid polypeptide reads, in one-letter code: eIF5-mimic protein 1 (419 aa).

Residues 1-22 (MNKHQKPVLTGQRFKTRKRDEK) form a disordered region. Lys117 carries the post-translational modification N6-acetyllysine. Positions 248–415 (VQQSLGTRKE…QNAEEESESE (168 aa)) constitute a W2 domain. A phosphoserine mark is found at Ser412 and Ser414.

It belongs to the BZW family. Interacts with EIF3E, EIF2S2 and EIF3C.

It is found in the cytoplasm. Functionally, translation initiation regulator which represses non-AUG initiated translation and repeat-associated non-AUG (RAN) initiated translation by acting as a competitive inhibitor of eukaryotic translation initiation factor 5 (EIF5) function. Increases the accuracy of translation initiation by impeding EIF5-dependent translation from non-AUG codons by competing with it for interaction with EIF2S2 within the 43S pre-initiation complex (PIC) in an EIF3C-binding dependent manner. The polypeptide is eIF5-mimic protein 1 (BZW2) (Macaca fascicularis (Crab-eating macaque)).